The primary structure comprises 231 residues: Probable septum site-determining protein MinC (231 aa).

Belongs to the MinC family. In terms of assembly, interacts with MinD and FtsZ.

Its function is as follows. Cell division inhibitor that blocks the formation of polar Z ring septums. Rapidly oscillates between the poles of the cell to destabilize FtsZ filaments that have formed before they mature into polar Z rings. Prevents FtsZ polymerization. This is Probable septum site-determining protein MinC from Baumannia cicadellinicola subsp. Homalodisca coagulata.